The primary structure comprises 426 residues: 4-hydroxy-3-methylbut-2-en-1-yl diphosphate synthase (flavodoxin) (426 aa).

[4Fe-4S] cluster contacts are provided by Cys320, Cys323, Cys366, and Glu373.

The protein belongs to the IspG family. [4Fe-4S] cluster serves as cofactor.

The catalysed reaction is (2E)-4-hydroxy-3-methylbut-2-enyl diphosphate + oxidized [flavodoxin] + H2O + 2 H(+) = 2-C-methyl-D-erythritol 2,4-cyclic diphosphate + reduced [flavodoxin]. The protein operates within isoprenoid biosynthesis; isopentenyl diphosphate biosynthesis via DXP pathway; isopentenyl diphosphate from 1-deoxy-D-xylulose 5-phosphate: step 5/6. In terms of biological role, converts 2C-methyl-D-erythritol 2,4-cyclodiphosphate (ME-2,4cPP) into 1-hydroxy-2-methyl-2-(E)-butenyl 4-diphosphate. In Wolbachia sp. subsp. Drosophila simulans (strain wRi), this protein is 4-hydroxy-3-methylbut-2-en-1-yl diphosphate synthase (flavodoxin).